The chain runs to 231 residues: NADH-ubiquinone oxidoreductase chain 4 (231 aa).

The next 6 membrane-spanning stretches (helical) occupy residues 1 to 21 (PIAG…YGII), 34 to 54 (MFLP…LTCL), 63 to 85 (IAYS…TPWG), 89 to 111 (AMAL…NTTY), 128 to 148 (ILPM…AVPP), and 156 to 176 (LLIM…LGLS).

The protein belongs to the complex I subunit 4 family.

Its subcellular location is the mitochondrion membrane. It catalyses the reaction a ubiquinone + NADH + 5 H(+)(in) = a ubiquinol + NAD(+) + 4 H(+)(out). Its function is as follows. Core subunit of the mitochondrial membrane respiratory chain NADH dehydrogenase (Complex I) that is believed to belong to the minimal assembly required for catalysis. Complex I functions in the transfer of electrons from NADH to the respiratory chain. The immediate electron acceptor for the enzyme is believed to be ubiquinone. The chain is NADH-ubiquinone oxidoreductase chain 4 (MT-ND4) from Agkistrodon contortrix contortrix (Southern copperhead).